Reading from the N-terminus, the 454-residue chain is tRNA modification GTPase MnmE (454 aa).

(6S)-5-formyl-5,6,7,8-tetrahydrofolate is bound by residues Arg23, Glu80, and Lys120. The TrmE-type G domain occupies 216-377 (GMKVVIAGRP…LRNHLKQSMG (162 aa)). Asn226 is a binding site for K(+). GTP-binding positions include 226–231 (NAGKSS), 245–251 (TDIAGTT), 270–273 (DTAG), and 335–338 (NKAD). Ser230 contacts Mg(2+). Positions 245, 247, and 250 each coordinate K(+). Position 251 (Thr251) interacts with Mg(2+). Lys454 contacts (6S)-5-formyl-5,6,7,8-tetrahydrofolate.

Belongs to the TRAFAC class TrmE-Era-EngA-EngB-Septin-like GTPase superfamily. TrmE GTPase family. In terms of assembly, homodimer. Heterotetramer of two MnmE and two MnmG subunits. Requires K(+) as cofactor.

Its subcellular location is the cytoplasm. In terms of biological role, exhibits a very high intrinsic GTPase hydrolysis rate. Involved in the addition of a carboxymethylaminomethyl (cmnm) group at the wobble position (U34) of certain tRNAs, forming tRNA-cmnm(5)s(2)U34. The sequence is that of tRNA modification GTPase MnmE from Escherichia coli O157:H7.